A 330-amino-acid chain; its full sequence is Heat-inducible transcription repressor HrcA (330 aa).

The protein belongs to the HrcA family.

Its function is as follows. Negative regulator of class I heat shock genes (grpE-dnaK-dnaJ and groELS operons). Prevents heat-shock induction of these operons. The sequence is that of Heat-inducible transcription repressor HrcA from Synechococcus sp. (strain RCC307).